A 327-amino-acid chain; its full sequence is cAMP-dependent protein kinase regulatory subunit (327 aa).

The interval 1-47 (MTNNISHNQKATEKVEAQNNNNITRKRRGAISSEPLGDKPATPLPNI) is disordered. The interval 1–65 (MTNNISHNQK…RLEQALSNNI (65 aa)) is dimerization and phosphorylation. Positions 27–31 (RRGAI) match the Pseudophosphorylation motif motif. A Phosphoserine modification is found at Ser32. 3',5'-cyclic AMP-binding positions include 66–188 (MFSH…EKVS), Glu136, Arg145, 189–327 (ILRH…SQKS), Glu262, and Arg271.

It belongs to the cAMP-dependent kinase regulatory chain family. In terms of assembly, in Dictyostelium the holoenzyme is a dimer composed of a regulatory (R) and a catalytic (C) subunit. In the presence of cAMP it dissociates into the active C subunit and an R monomer. In other eukaryotes the holoenzyme is a tetramer composed of 2 regulatory (R) and 2 catalytic (C) subunits. In the presence of cAMP it dissociates into active monomeric C subunits and an R dimer. Post-translationally, the pseudophosphorylation site binds to the substrate-binding region of the catalytic chain but is not phosphorylated. The physiological significance of phosphorylations by other kinases is unclear.

The protein is cAMP-dependent protein kinase regulatory subunit (pkaR) of Dictyostelium discoideum (Social amoeba).